The primary structure comprises 299 residues: S-methyl-5'-thioadenosine phosphorylase (299 aa).

Residues Ser14, 56–57 (RH), and 89–90 (SA) each bind phosphate. Met191 provides a ligand contact to substrate. Thr192 contacts phosphate. A substrate-binding site is contributed by 215-217 (DYD).

Belongs to the PNP/MTAP phosphorylase family. MTAP subfamily. As to quaternary structure, homohexamer. Dimer of a homotrimer.

The catalysed reaction is S-methyl-5'-thioadenosine + phosphate = 5-(methylsulfanyl)-alpha-D-ribose 1-phosphate + adenine. The protein operates within amino-acid biosynthesis; L-methionine biosynthesis via salvage pathway; S-methyl-5-thio-alpha-D-ribose 1-phosphate from S-methyl-5'-thioadenosine (phosphorylase route): step 1/1. Functionally, catalyzes the reversible phosphorylation of S-methyl-5'-thioadenosine (MTA) to adenine and 5-methylthioribose-1-phosphate. Involved in the breakdown of MTA, a major by-product of polyamine biosynthesis. Responsible for the first step in the methionine salvage pathway after MTA has been generated from S-adenosylmethionine. Has broad substrate specificity with 6-aminopurine nucleosides as preferred substrates. The protein is S-methyl-5'-thioadenosine phosphorylase of Gloeobacter violaceus (strain ATCC 29082 / PCC 7421).